We begin with the raw amino-acid sequence, 552 residues long: CTP synthase (552 aa).

Residues 1 to 270 (MTKYVFVTGG…DRIICEELKL (270 aa)) are amidoligase domain. Ser13 lines the CTP pocket. A UTP-binding site is contributed by Ser13. Residues 14–19 (SLGKGI) and Asp71 contribute to the ATP site. Mg(2+) is bound by residues Asp71 and Glu144. CTP contacts are provided by residues 151 to 153 (DIE), 191 to 196 (KTKPTQ), and Lys227. Residues 191–196 (KTKPTQ) and Lys227 contribute to the UTP site. One can recognise a Glutamine amidotransferase type-1 domain in the interval 295–547 (TIGMVGKYVD…VEAAFANKQA (253 aa)). Residue Gly356 participates in L-glutamine binding. The Nucleophile; for glutamine hydrolysis role is filled by Cys383. Residues 384-387 (LGMQ), Glu407, and Arg473 contribute to the L-glutamine site. Active-site residues include His520 and Glu522.

The protein belongs to the CTP synthase family. As to quaternary structure, homotetramer.

It catalyses the reaction UTP + L-glutamine + ATP + H2O = CTP + L-glutamate + ADP + phosphate + 2 H(+). The catalysed reaction is L-glutamine + H2O = L-glutamate + NH4(+). It carries out the reaction UTP + NH4(+) + ATP = CTP + ADP + phosphate + 2 H(+). It participates in pyrimidine metabolism; CTP biosynthesis via de novo pathway; CTP from UDP: step 2/2. Its activity is regulated as follows. Allosterically activated by GTP, when glutamine is the substrate; GTP has no effect on the reaction when ammonia is the substrate. The allosteric effector GTP functions by stabilizing the protein conformation that binds the tetrahedral intermediate(s) formed during glutamine hydrolysis. Inhibited by the product CTP, via allosteric rather than competitive inhibition. Functionally, catalyzes the ATP-dependent amination of UTP to CTP with either L-glutamine or ammonia as the source of nitrogen. Regulates intracellular CTP levels through interactions with the four ribonucleotide triphosphates. The protein is CTP synthase of Burkholderia ambifaria (strain ATCC BAA-244 / DSM 16087 / CCUG 44356 / LMG 19182 / AMMD) (Burkholderia cepacia (strain AMMD)).